We begin with the raw amino-acid sequence, 1297 residues long: DNA-directed RNA polymerase subunit beta' (1297 aa).

Zn(2+) is bound by residues Cys60, Cys62, Cys75, and Cys78. Asp535, Asp537, and Asp539 together coordinate Mg(2+). The Zn(2+) site is built by Cys883, Cys961, Cys968, and Cys971.

This sequence belongs to the RNA polymerase beta' chain family. As to quaternary structure, the RNAP catalytic core consists of 2 alpha, 1 beta, 1 beta' and 1 omega subunit. When a sigma factor is associated with the core the holoenzyme is formed, which can initiate transcription. Mg(2+) serves as cofactor. It depends on Zn(2+) as a cofactor.

It carries out the reaction RNA(n) + a ribonucleoside 5'-triphosphate = RNA(n+1) + diphosphate. Its function is as follows. DNA-dependent RNA polymerase catalyzes the transcription of DNA into RNA using the four ribonucleoside triphosphates as substrates. The chain is DNA-directed RNA polymerase subunit beta' from Salinispora arenicola (strain CNS-205).